The following is an 878-amino-acid chain: Alanine--tRNA ligase (878 aa).

Positions 570, 574, 672, and 676 each coordinate Zn(2+). The tract at residues glycine 844–alanine 864 is disordered. A compositionally biased stretch (low complexity) spans alanine 855 to alanine 864.

It belongs to the class-II aminoacyl-tRNA synthetase family. Zn(2+) serves as cofactor.

Its subcellular location is the cytoplasm. It carries out the reaction tRNA(Ala) + L-alanine + ATP = L-alanyl-tRNA(Ala) + AMP + diphosphate. Catalyzes the attachment of alanine to tRNA(Ala) in a two-step reaction: alanine is first activated by ATP to form Ala-AMP and then transferred to the acceptor end of tRNA(Ala). Also edits incorrectly charged Ser-tRNA(Ala) and Gly-tRNA(Ala) via its editing domain. This chain is Alanine--tRNA ligase, found in Paramagnetospirillum magneticum (strain ATCC 700264 / AMB-1) (Magnetospirillum magneticum).